A 307-amino-acid polypeptide reads, in one-letter code: MVQSIDINKKLESILDKEEIKNNILMKNYTSFKVGGPADIFVTPNSYEKVKGVINICKENNIPYFILGNGSNVLVRDGGIRGVVVSFNKLNKVYAEGNKVIAESGTLLSMVANTALKSDLTGLEFAHGIPGSVGGAVTMNAGAYNGEISQVIESATVIDNNGKIIKLSKEELDLSYRNSIILKNGYVVLNATFALQKGDHDAIKGRMDDLMRRRKEKQPLEYPSAGSTFKRPEGYFAAKLIEDSGLKGTHVGDAEVSIKHSGFLINKGKASAKDILDLIEVVKKTVKEKFNVELNTEVRIVGEESEN.

Positions 33-198 (KVGGPADIFV…LNATFALQKG (166 aa)) constitute an FAD-binding PCMH-type domain. The active site involves Arg-177. The active-site Proton donor is the Ser-227. Glu-297 is an active-site residue.

It belongs to the MurB family. The cofactor is FAD.

The protein resides in the cytoplasm. It catalyses the reaction UDP-N-acetyl-alpha-D-muramate + NADP(+) = UDP-N-acetyl-3-O-(1-carboxyvinyl)-alpha-D-glucosamine + NADPH + H(+). It functions in the pathway cell wall biogenesis; peptidoglycan biosynthesis. In terms of biological role, cell wall formation. The polypeptide is UDP-N-acetylenolpyruvoylglucosamine reductase (Clostridium novyi (strain NT)).